A 97-amino-acid polypeptide reads, in one-letter code: Protein S100-A10 (97 aa).

An N6-acetyllysine mark is found at K23, K28, K54, and K57. One can recognise an EF-hand domain in the interval 47-82; sequence KDPLAVDKIMKDLDQCRDGKVGFQSFLSLVAGLTIA. Positions 60–71 are ancestral calcium site; that stretch reads DQCRDGKVGFQS.

It belongs to the S-100 family. As to quaternary structure, heterotetramer containing 2 light chains of S100A10/p11 and 2 heavy chains of ANXA2/p36. Interacts with SCN10A. Interacts with TASOR.

In terms of biological role, because S100A10 induces the dimerization of ANXA2/p36, it may function as a regulator of protein phosphorylation in that the ANXA2 monomer is the preferred target (in vitro) of tyrosine-specific kinase. The chain is Protein S100-A10 (S100a10) from Mus musculus (Mouse).